Consider the following 1218-residue polypeptide: MRSPRGGAAAQPSGRRGDTTAAAAGDLVTTQVSLGGFDAGVAAGDLADFLEHEVGLVWRCRVKTSWTPPDSYPDFALPTAPASASAAAAPPRYDRVPPHAFVHFARPEGARRAADLAGETRLILRGKPLRVASAPDSSLRVSRRSSIAPFRFPDVRLEVGALPSPGAFLAAWRGPDAGLDLSVDPFDGCCRLVFTRDTAFTFPGFREVAAIRCDVKLEFPVRDVLEVRLYRLDCSLLLRLAAAPLVHYRTADDDFHEPVPFDLLDDDDPWIRTTDITPSGAIGRCGVYRISFSARFWPKMDRALDYMRERRVAIVDCGGGWGPRRGLTVRDELEFGEPMQDVFFCLQHAEGLKFPLLFMVNALVHKGIINQHQLTPEFFSLLGRSEENVNVAALRDFWGDKFPVFDACGRLKKALNRVARNPKLLCSKVGDDHAEVRRLVITPTRAYCLPPEVERSNRVLRHYHEVADRFLRVTFMDEGMQVLNNNVLNSFTAPIVKDLMSNFFQQKTTVYKRVRMLLTEGFHMCGRKYSFLAFSSNQLRDKSAWFFAEDRKTTVEAIRKWMGRFTSKNVAKHAARMGQCFSSTYATVTMRPDEVDESFDDVVHNEYIFSDGIGKITPDLALEVAERLQLTDNPPSAYQIRFAGFKGVIAVWQGHGDGTRLFLRPSMRKFESNHLVLEVVSWTKFQPGFLNRQIIILLSSLNVPDSIFWQMQETMLSNLNNILSDRDVAFEVLTTSCADDGNTAALMLSAGFEPRTEPHLKAMLLAIRSAQLQDLLEKARIFVPKGRWLMGCLDELGVLEQGQCFIRATVPSLNSYFVKHGSRFSSTDKNTEVILGTVVIAKNPCLHPGDVRILEAVDVPELHHLVDCLVFPQKGERPHANEASGSDLDGDLYFVTWDEKLIPPGKKSWNPMDYSPPEAKQLPRQVSQHDIIDFFLKNMISENLGRICNAHVVHADLSEYGAMDEKCIHLAELAATAVDFPKTGKLAIMPPHLKPKVYPDFMGKEDGQSYKSEKILGRLYRSIQEASNGDVVSQEVCTPNDLPYDIDLEVPGASDFLASAWQCKCSYDAQLSALLSQYRVRTEAELVTGHITFLVKNSSKKQGDIKDRLKTAYSALRKEFKSTFESIASDQCEIGDDEKNLLYEMKASAWYQVTYHPKWVEKSRGILGPDGEEIPASLSFAWIPVDYLARIKLRCHGKVRVEGQKPVERLAAYISERI.

Belongs to the RdRP family.

It carries out the reaction RNA(n) + a ribonucleoside 5'-triphosphate = RNA(n+1) + diphosphate. Functionally, involved in the RNA silencing pathway. Probably required for the generation of small interfering RNAs (siRNAs). Regulates shoot apical meristem (SAM) initiation and maintenance and leaf polarization through the trans-acting siRNAS (ta-siRNAs) pathway which probably modulates the expression of the ARF2, ARF3, ARF4, ARF14 and ARF15 genes. The chain is Probable RNA-dependent RNA polymerase SHL2 (SHL2) from Oryza sativa subsp. japonica (Rice).